The primary structure comprises 432 residues: MADGSCLGSGPQLGLIALLVVLLFSAVPLAQSRELRFVTLVYRHGDRSPVHGYPTDVHKESVWPQGYGQLTQVGMKQHWDLGQELRARYKGFLNESYNRHEIYVRSTDVDRTLMSAEANLAGLYPPEGPQIFNPNITWQPIPIHTIPESEDQLLKFPISPCPAYVKLQEETRQSAEYINMTTTYKAFLQMVANKTGLSDCTLESVWSVYDTLFCEKTHNFSLPTWATADVLSKLNKLKDFSFVFLFGVHERVKKARLQGGVLVDQILKNMTAAANNASNGLKLLAYSAHDSTLGALQLALDVYNGKQAPYASCHIFELYKEDSGNFTVQMYFRNESGKTPYPVSLPGCAHACPLQDFQSLLQPILAQDWEEECQTTSFIMTEETIIGLTIGAIALFIIIVVLMLLSCNEPKDDGYQHVSDEGDDHETKGLAM.

A signal peptide spans 1–32 (MADGSCLGSGPQLGLIALLVVLLFSAVPLAQS). The Lumenal segment spans residues 33-384 (RELRFVTLVY…TTSFIMTEET (352 aa)). Catalysis depends on His-44, which acts as the Nucleophile. Residues Asn-94, Asn-135, Asn-179, Asn-193, and Asn-269 are each glycosylated (N-linked (GlcNAc...) asparagine). 3 disulfides stabilise this stretch: Cys-161–Cys-373, Cys-214–Cys-313, and Cys-348–Cys-352. Catalysis depends on Asp-290, which acts as the Proton donor. Asn-325 and Asn-334 each carry an N-linked (GlcNAc...) asparagine glycan. The chain crosses the membrane as a helical span at residues 385–405 (IIGLTIGAIALFIIIVVLMLL). Residues 406-432 (SCNEPKDDGYQHVSDEGDDHETKGLAM) are Cytoplasmic-facing.

It belongs to the histidine acid phosphatase family. The membrane-bound form is converted to the soluble form by sequential proteolytic processing. First, the C-terminal cytoplasmic tail is removed. Cleavage by a lysosomal protease releases the soluble form in the lysosome lumen.

It localises to the lysosome membrane. Its subcellular location is the lysosome lumen. It catalyses the reaction a phosphate monoester + H2O = an alcohol + phosphate. The chain is Lysosomal acid phosphatase (acp2) from Xenopus laevis (African clawed frog).